A 1640-amino-acid polypeptide reads, in one-letter code: MAIDVDRTLAVLRRKLEALGYSDPLEPASLQLVQKLVEDLVHTTDSYTAVKQQCAKQAQEIAAFDTRLESVRQDSVRLQSENSQLHVLVMQHAERHEREAREHYTAVKRLEDTIAELSYWKHAAAEKLASADKENAGLRKRCEELAKLTDRLASGAATPQSVAPKISSRSPIRVAPPPSPPRPRQATVDVLQAANGRILSLQRQLADATAELQELRQRVAEDEDQIRRRDVEIDRLGTRAGTDTNVLALRARNEANESMILQLNGTVESLAARVRELEAVEVRCEELQGALRRAEMDRDQAEERYSRSARDHDALSREVLGLRRDLAALQDTNNRAAGLLAADAAGASTPDTTAGAPALRQRLADSRADVERLSGQLAAADMERRNLAQQLSALRSELDDTQFLLAEAQSRAAGLAAAQAVAESEARRLAGEAAAREGRLRELDSQLAVVLSDLEARQAGFAALEKDRAEANARAEELARRLDEVERSAASERAAAAAAQQSVSRLDSELRVVRGSAAALEAEAAALRQELQDVSVGKVRATSALSSTEDEAVRARQQAEALRMQLTAERRAAEELRAGHDTLQLEVDRLGGQLALQQQEAELLRQQLAAARGELAASEAAASGAEQKLSGLGALSQRLEEMGEQARRAQAATAEAEAEAVRLRAAVSEAKEGQARAERGLREARREVEGAREAEALVRAQLREVEAQAEGTSKALKAAEADRDRALMDARLAAGDLASLRDQLAAETSSAADAGSTARQMAARLSAAERAAAAAQEERERAAVAAEEAEAAAAAARGREEEARAQGREWAERARRAEALVAEYEADVAQLRAARDSDAAALRSLEDTVAAARRDLDARRSEVEQLTTLSLRGDATVQEYMANLKAMSTDLRAAEMRAADLAGEAAAAQDAAASWRSEAEQLRGLLRQMDADRDNLQHELDAKAERLVAQEQQLAGAQAAEQEAARLLALAEGRLALTDNRAREGEAEAAAVRAQLAAALDSVRALSGEGEALREELRAVSEDLEALVRENQVVGGELAAVAAQRDSAAEEARRLGGRRASAEQLLRAKEAEAEDLRRVYEALAAEHRRLQGGVGALEREGAMREAALQAKAAEVSSLAESQRAAQATINQYVMDLQAFERQVDSLSRQLSQAEADGEELVRQREALLEEIRAAQQVRLGLERHREELQRQVASLDSQVAIGRARLEDSNSEAASLNQRLAMERSRVAELEGLLAGMRAREFRSDFASDRAGGQLAVMVDRNRALEEQVASLQHQVGALQASREAQDRELSRLRGEALALAASTAASLEGRTAAAGGAAAGAAKDQAAALDRLTSERDAAQDEAARLRGALAAAEAAAASASTAAAVSIPAAGSGSEAAAVLRVRCSELERRNTELMQELRTLQDTCRQQESLLSAAQNELSALQAEHRRLVELVARLDQDKAAAAAEAAAARQQVATATRRVATAEQEAAAGAARLQSQLRDEQGRRRQAERDFLELLSSIEGAGGEAAAAAVAAAHGEGAAELASRRLRELQTQVDALEAEKAGLEEATQRTRATLGAMSGQMAAIQAEYDATNTALAGLAGAMAAGAQGQGQVQGPAGTAPAAAAGAPGPQPGQAQAGGFGGAHGGGSISLSGGPRR.

The segment at 11–64 (VLRRKLEALGYSDPLEPASLQLVQKLVEDLVHTTDSYTAVKQQCAKQAQEIAAF) is homodimerization. A coiled-coil region spans residues 93–148 (AERHEREAREHYTAVKRLEDTIAELSYWKHAAAEKLASADKENAGLRKRCEELAKL). Residues 154-185 (SGAATPQSVAPKISSRSPIRVAPPPSPPRPRQ) form a disordered region. Positions 174 to 183 (VAPPPSPPRP) are enriched in pro residues. Coiled-coil stretches lie at residues 191–232 (LQAA…RDVE), 260–332 (ILQL…LQDT), 370–411 (VERL…AQSR), 461–722 (FAAL…AEAD), 758–960 (ARQM…AQAA), 1010–1030 (GEAL…LVRE), 1059–1086 (RASA…LAAE), 1129–1282 (INQY…LQAS), 1323–1494 (AKDQ…AERD), and 1523–1557 (AELA…TRAT). Low complexity predominate over residues 1592–1618 (GQGQVQGPAGTAPAAAAGAPGPQPGQA). The segment at 1592–1640 (GQGQVQGPAGTAPAAAAGAPGPQPGQAQAGGFGGAHGGGSISLSGGPRR) is disordered. Residues 1619 to 1631 (QAGGFGGAHGGGS) are compositionally biased toward gly residues.

Belongs to the CEP135/TSGA10 family. As to quaternary structure, homodimer.

It is found in the cytoplasm. The protein localises to the cytoskeleton. Its subcellular location is the microtubule organizing center. The protein resides in the centrosome. It localises to the centriole. In terms of biological role, microtubule-binding protein essential for cytoskeletal organization (e.g. rootlet microtubule bundles) and flagellar basal body/centriole assembly. The polypeptide is Basal body protein 10 (Chlamydomonas reinhardtii (Chlamydomonas smithii)).